We begin with the raw amino-acid sequence, 194 residues long: Inosine triphosphate pyrophosphatase (194 aa).

10-15 contacts ITP; it reads TGNANK. E41 is a binding site for Mg(2+). ITP is bound by residues K54, 72-73, K89, 147-150, K172, and 177-178; these read DT, FGWD, and QR.

This sequence belongs to the HAM1 NTPase family. As to quaternary structure, homodimer. It depends on Mg(2+) as a cofactor. The cofactor is Mn(2+).

It localises to the cytoplasm. The protein resides in the nucleus. It carries out the reaction ITP + H2O = IMP + diphosphate + H(+). It catalyses the reaction dITP + H2O = dIMP + diphosphate + H(+). The catalysed reaction is XTP + H2O = XMP + diphosphate + H(+). In terms of biological role, pyrophosphatase that hydrolyzes non-canonical purine nucleotides such as inosine triphosphate (ITP), deoxyinosine triphosphate (dITP) or xanthosine 5'-triphosphate (XTP) to their respective monophosphate derivatives. The enzyme does not distinguish between the deoxy- and ribose forms. Probably excludes non-canonical purines from RNA and DNA precursor pools, thus preventing their incorporation into RNA and DNA and avoiding chromosomal lesions. The polypeptide is Inosine triphosphate pyrophosphatase (Kluyveromyces lactis (strain ATCC 8585 / CBS 2359 / DSM 70799 / NBRC 1267 / NRRL Y-1140 / WM37) (Yeast)).